Here is a 305-residue protein sequence, read N- to C-terminus: Porphobilinogen deaminase (305 aa).

S-(dipyrrolylmethanemethyl)cysteine is present on cysteine 243.

It belongs to the HMBS family. Monomer. Requires dipyrromethane as cofactor.

The catalysed reaction is 4 porphobilinogen + H2O = hydroxymethylbilane + 4 NH4(+). It functions in the pathway porphyrin-containing compound metabolism; protoporphyrin-IX biosynthesis; coproporphyrinogen-III from 5-aminolevulinate: step 2/4. Tetrapolymerization of the monopyrrole PBG into the hydroxymethylbilane pre-uroporphyrinogen in several discrete steps. This chain is Porphobilinogen deaminase, found in Limosilactobacillus reuteri (strain DSM 20016) (Lactobacillus reuteri).